The following is a 147-amino-acid chain: Nucleoside diphosphate kinase (147 aa).

Residues lysine 11, phenylalanine 59, arginine 87, threonine 93, arginine 104, and asparagine 114 each contribute to the ATP site. Catalysis depends on histidine 117, which acts as the Pros-phosphohistidine intermediate.

Belongs to the NDK family. In terms of assembly, homotetramer. Requires Mg(2+) as cofactor.

Its subcellular location is the cytoplasm. The catalysed reaction is a 2'-deoxyribonucleoside 5'-diphosphate + ATP = a 2'-deoxyribonucleoside 5'-triphosphate + ADP. The enzyme catalyses a ribonucleoside 5'-diphosphate + ATP = a ribonucleoside 5'-triphosphate + ADP. Its function is as follows. Major role in the synthesis of nucleoside triphosphates other than ATP. The ATP gamma phosphate is transferred to the NDP beta phosphate via a ping-pong mechanism, using a phosphorylated active-site intermediate. The polypeptide is Nucleoside diphosphate kinase (Anaeromyxobacter dehalogenans (strain 2CP-1 / ATCC BAA-258)).